Consider the following 470-residue polypeptide: Peripherin (470 aa).

The head stretch occupies residues methionine 1–glutamine 99. Tyrosine 17 is modified (3'-nitrotyrosine). Phosphoserine is present on residues serine 28, serine 50, and serine 59. Positions glutamate 97–isoleucine 407 constitute an IF rod domain. A coil 1A region spans residues glutamate 100 to alanine 132. A linker 1 region spans residues arginine 133–leucine 143. Residues cysteine 144–leucine 239 are coil 1B. Residues glutamine 240–threonine 262 form a linker 2 region. The interval alanine 263–serine 405 is coil 2. Tyrosine 379 carries the 3'-nitrotyrosine modification. Residues arginine 406–tyrosine 470 form a tail region. A disordered region spans residues asparagine 447 to tyrosine 470. Over residues serine 454 to tyrosine 470 the composition is skewed to basic and acidic residues. Tyrosine 470 carries the phosphotyrosine modification.

Belongs to the intermediate filament family. As to quaternary structure, forms homodimers (in vitro). Homopolymerizes into a filamentous network (in vitro). Forms heterodimers with NEFL, NEFM or NEFH (in vitro). Interacts with DST (via C-terminus). Interacts with RAB7A; the interaction is direct. Interacts with PRKCE (via phorbol-ester/DAG-type 2 domain). Phosphorylated; phosphorylation increases after nerve injury in regenerating neurons. As to expression, expressed in the neurons of the outer hair cells in the organ of Corti and to a lesser extent in type I spiral ganglion cells.

The protein localises to the cytoplasm. It is found in the cytoskeleton. It localises to the cell projection. The protein resides in the axon. Its subcellular location is the perikaryon. In terms of biological role, class-III neuronal intermediate filament protein. May form an independent structural network without the involvement of other neurofilaments or may cooperate with the neuronal intermediate filament proteins NEFL, NEFH, NEFM and INA to form a filamentous network. Assembly of the neuronal intermediate filaments may be regulated by RAB7A. Plays a role in the development of unmyelinated sensory neurons. May be involved in axon elongation and axon regeneration after injury. Inhibits neurite extension in type II spiral ganglion neurons in the cochlea. This Homo sapiens (Human) protein is Peripherin (PRPH).